The primary structure comprises 202 residues: Holliday junction branch migration complex subunit RuvA (202 aa).

The interval 1–64 (MIGRLRGSLA…EDAHLLYGFY (64 aa)) is domain I. Residues 65–143 (EKRERELFRE…AWESLPGTFT (79 aa)) are domain II. The flexible linker stretch occupies residues 144–153 (LVSNGPNQAE). The interval 154-202 (PVASAESDAVSALISLGYKPQEASKAVSAIKEKDLSSADLIRRALKGMG) is domain III.

The protein belongs to the RuvA family. In terms of assembly, homotetramer. Forms an RuvA(8)-RuvB(12)-Holliday junction (HJ) complex. HJ DNA is sandwiched between 2 RuvA tetramers; dsDNA enters through RuvA and exits via RuvB. An RuvB hexamer assembles on each DNA strand where it exits the tetramer. Each RuvB hexamer is contacted by two RuvA subunits (via domain III) on 2 adjacent RuvB subunits; this complex drives branch migration. In the full resolvosome a probable DNA-RuvA(4)-RuvB(12)-RuvC(2) complex forms which resolves the HJ.

It localises to the cytoplasm. The RuvA-RuvB-RuvC complex processes Holliday junction (HJ) DNA during genetic recombination and DNA repair, while the RuvA-RuvB complex plays an important role in the rescue of blocked DNA replication forks via replication fork reversal (RFR). RuvA specifically binds to HJ cruciform DNA, conferring on it an open structure. The RuvB hexamer acts as an ATP-dependent pump, pulling dsDNA into and through the RuvAB complex. HJ branch migration allows RuvC to scan DNA until it finds its consensus sequence, where it cleaves and resolves the cruciform DNA. The sequence is that of Holliday junction branch migration complex subunit RuvA from Pseudomonas savastanoi pv. phaseolicola (strain 1448A / Race 6) (Pseudomonas syringae pv. phaseolicola (strain 1448A / Race 6)).